A 467-amino-acid polypeptide reads, in one-letter code: MDISALFLTLFAGSLFLYFLRCLISQRRFGSSKLPLPPGTMGWPYVGETFQLYSQDPNVFFQSKQKRYGSVFKTHVLGCPCVMISSPEAAKFVLVTKSHLFKPTFPASKERMLGKQAIFFHQGDYHAKLRKLVLRAFMPESIRNMVPDIESIAQDSLRSWEGTMINTYQEMKTYTFNVALLSIFGKDEVLYREDLKRCYYILEKGYNSMPVNLPGTLFHKSMKARKELSQILARILSERRQNGSSHNDLLGSFMGDKEELTDEQIADNIIGVIFAARDTTASVMSWILKYLAENPNVLEAVTEEQMAIRKDKEEGESLTWGDTKKMPLTSRVIQETLRVASILSFTFREAVEDVEYEGYLIPKGWKVLPLFRNIHHSADIFSNPGKFDPSRFEVAPKPNTFMPFGNGTHSCPGNELAKLEMSIMIHHLTTKYSWSIVGASDGIQYGPFALPQNGLPIVLARKPEIEV.

Residues 5–24 (ALFLTLFAGSLFLYFLRCLI) traverse the membrane as a helical segment. Position 411 (Cys-411) interacts with heme.

The protein belongs to the cytochrome P450 family. It depends on heme as a cofactor. Mainly expressed in flowers, siliques, roots and stems. Lower expression in rosette leaves and dry seeds. Expressed in vascular tissues of embryo during the seed development.

Its subcellular location is the membrane. The enzyme catalyses 2-cis-(+)-abscisate + reduced [NADPH--hemoprotein reductase] + O2 = (+)-8'-hydroxyabscisate + oxidized [NADPH--hemoprotein reductase] + H2O + H(+). Its pathway is plant hormone degradation; abscisic acid degradation. In terms of biological role, involved in the oxidative degradation of abscisic acid. Plays an important role in determining abscisic acid levels in dry seeds and in the control of postgermination growth. The sequence is that of Abscisic acid 8'-hydroxylase 1 (CYP707A1) from Arabidopsis thaliana (Mouse-ear cress).